The primary structure comprises 846 residues: Enhancer of polycomb-like protein 1 (846 aa).

Disordered regions lie at residues 169 to 204 (FNSK…KGDA), 391 to 466 (TSDE…APDA), 587 to 609 (EKKR…PKAM), 682 to 702 (AADA…PQPN), and 759 to 804 (QVQA…GVKQ). A compositionally biased stretch (basic and acidic residues) spans 180-203 (VKSDKEQGRGMRVKGKDREKEKGD). Polar residues predominate over residues 411-426 (PSLSGQTPLTSGQSSS). A compositionally biased stretch (basic and acidic residues) spans 432–452 (TDKDREERAQRERYDAQRNAE). Positions 434-490 (KDREERAQRERYDAQRNAERSGILSGRSNAPDALKERLQALQQKTEEMLARKKEQDA) form a coiled coil. Over residues 686–702 (KPPPAPIFQKPPAPQPN) the composition is skewed to pro residues. The span at 759-773 (QVQAQGQGHPQAHLQ) shows a compositional bias: low complexity. A compositionally biased stretch (polar residues) spans 774–796 (THPQGVSQPNGVNSPMPNGQQML).

This sequence belongs to the enhancer of polycomb family. As to quaternary structure, component of the NuA4 histone acetyltransferase complex.

The protein resides in the nucleus. Its function is as follows. Component of the NuA4 histone acetyltransferase complex which is involved in transcriptional activation of selected genes principally by acetylation of nucleosomal histone H4 and H2A. The NuA4 complex is also involved in DNA repair. Involved in gene silencing by neighboring heterochromatin, blockage of the silencing spreading along the chromosome, and required for cell cycle progression through G2/M. In Cryptococcus neoformans var. neoformans serotype D (strain B-3501A) (Filobasidiella neoformans), this protein is Enhancer of polycomb-like protein 1 (EPL1).